A 351-amino-acid polypeptide reads, in one-letter code: Glucose 1-dehydrogenase 1 (351 aa).

A Zn(2+)-binding site is contributed by cysteine 39. Threonine 41 serves as a coordination point for substrate. Residues histidine 64 and glutamate 65 each coordinate Zn(2+). Glutamate 113 and glutamate 149 together coordinate substrate. Residue glutamate 149 participates in Zn(2+) binding. NADP(+)-binding positions include 182-185 (AGPI), 265-267 (LGI), and 292-294 (ATN). Asparagine 294 contacts substrate.

It belongs to the zinc-containing alcohol dehydrogenase family. Glucose 1-dehydrogenase subfamily. It depends on Zn(2+) as a cofactor.

The enzyme catalyses D-glucose + NAD(+) = D-glucono-1,5-lactone + NADH + H(+). It carries out the reaction D-glucose + NADP(+) = D-glucono-1,5-lactone + NADPH + H(+). Its function is as follows. Catalyzes the NAD(P)(+)-dependent oxidation of D-glucose to D-gluconate via gluconolactone. Can utilize both NAD(+) and NADP(+) as electron acceptor. Is involved in the degradation of glucose through a non-phosphorylative variant of the Entner-Doudoroff pathway. This Vulcanisaeta moutnovskia (strain 768-28) protein is Glucose 1-dehydrogenase 1.